The sequence spans 294 residues: Shikimate dehydrogenase (NADP(+)) (294 aa).

Residues 25-27 (SAS) and Thr72 each bind shikimate. Residue Lys76 is the Proton acceptor of the active site. Asn97 and Asp112 together coordinate shikimate. NADP(+)-binding positions include 136 to 140 (GAGGA) and Thr234. Position 236 (Tyr236) interacts with shikimate. Gly257 contributes to the NADP(+) binding site.

Belongs to the shikimate dehydrogenase family. In terms of assembly, homodimer.

It carries out the reaction shikimate + NADP(+) = 3-dehydroshikimate + NADPH + H(+). Its pathway is metabolic intermediate biosynthesis; chorismate biosynthesis; chorismate from D-erythrose 4-phosphate and phosphoenolpyruvate: step 4/7. Its function is as follows. Involved in the biosynthesis of the chorismate, which leads to the biosynthesis of aromatic amino acids. Catalyzes the reversible NADPH linked reduction of 3-dehydroshikimate (DHSA) to yield shikimate (SA). The sequence is that of Shikimate dehydrogenase (NADP(+)) from Symbiobacterium thermophilum (strain DSM 24528 / JCM 14929 / IAM 14863 / T).